We begin with the raw amino-acid sequence, 268 residues long: Elongation factor Ts (268 aa).

The interval 81-84 (TDFV) is involved in Mg(2+) ion dislocation from EF-Tu.

It belongs to the EF-Ts family.

Its subcellular location is the cytoplasm. Functionally, associates with the EF-Tu.GDP complex and induces the exchange of GDP to GTP. It remains bound to the aminoacyl-tRNA.EF-Tu.GTP complex up to the GTP hydrolysis stage on the ribosome. This Buchnera aphidicola subsp. Acyrthosiphon pisum (strain 5A) protein is Elongation factor Ts.